The sequence spans 266 residues: Tryptophan synthase alpha chain (266 aa).

Active-site proton acceptor residues include Glu45 and Asp56.

The protein belongs to the TrpA family. As to quaternary structure, tetramer of two alpha and two beta chains.

It carries out the reaction (1S,2R)-1-C-(indol-3-yl)glycerol 3-phosphate + L-serine = D-glyceraldehyde 3-phosphate + L-tryptophan + H2O. The protein operates within amino-acid biosynthesis; L-tryptophan biosynthesis; L-tryptophan from chorismate: step 5/5. In terms of biological role, the alpha subunit is responsible for the aldol cleavage of indoleglycerol phosphate to indole and glyceraldehyde 3-phosphate. The chain is Tryptophan synthase alpha chain from Novosphingobium aromaticivorans (strain ATCC 700278 / DSM 12444 / CCUG 56034 / CIP 105152 / NBRC 16084 / F199).